Here is a 362-residue protein sequence, read N- to C-terminus: Atypical chemokine receptor 3 (362 aa).

Residues methionine 1 to lysine 40 lie on the Extracellular side of the membrane. Asparagine 13, asparagine 22, and asparagine 39 each carry an N-linked (GlcNAc...) asparagine glycan. A helical transmembrane segment spans residues serine 41 to alanine 61. At asparagine 62 to cysteine 81 the chain is on the cytoplasmic side. A helical transmembrane segment spans residues tyrosine 82 to valine 102. At serine 103–lysine 118 the chain is on the extracellular side. Cysteines 117 and 196 form a disulfide. The chain crosses the membrane as a helical span at residues valine 119–serine 139. Residues valine 140–arginine 162 are Cytoplasmic-facing. Residues valine 163–leucine 183 traverse the membrane as a helical segment. At lysine 184–glutamate 213 the chain is on the extracellular side. Residues leucine 214 to leucine 234 form a helical membrane-spanning segment. Over leucine 235–lysine 252 the chain is Cytoplasmic. The helical transmembrane segment at isoleucine 253 to leucine 273 threads the bilayer. Residues leucine 274 to alanine 296 are Extracellular-facing. Residues leucine 297–asparagine 319 traverse the membrane as a helical segment. Residues arginine 320–lysine 362 are Cytoplasmic-facing. The C-terminal cytoplasmic tail stretch occupies residues tyrosine 324–lysine 362. Phosphoserine occurs at positions 347, 350, and 355.

This sequence belongs to the G-protein coupled receptor 1 family. Atypical chemokine receptor subfamily. As to quaternary structure, homodimer. Can form heterodimers with CXCR4; heterodimerization may regulate CXCR4 signaling activity. Interacts with ARRB1 and ARRB2. The Ser/Thr residues in the C-terminal cytoplasmic tail may be phosphorylated. Post-translationally, ubiquitinated at the Lys residues in its C-terminal cytoplasmic tail and is essential for correct trafficking from and to the cell membrane. Deubiquitinated by CXCL12-stimulation in a reversible manner. As to expression, expressed in monocytes, basophils, B-cells, umbilical vein endothelial cells (HUVEC) and B-lymphoblastoid cells. Lower expression detected in CD4+ T-lymphocytes and natural killer cells. In the brain, detected in endothelial cells and capillaries, and in mature neurons of the frontal cortex and hippocampus. Expressed in tubular formation in the kidney. Highly expressed in astroglial tumor endothelial, microglial and glioma cells. Expressed at low levels in normal CD34+ progenitor cells, but at very high levels in several myeloid malignant cell lines. Expressed in breast carcinomas but not in normal breast tissue (at protein level).

It localises to the cell membrane. It is found in the early endosome. The protein localises to the recycling endosome. Its function is as follows. Atypical chemokine receptor that controls chemokine levels and localization via high-affinity chemokine binding that is uncoupled from classic ligand-driven signal transduction cascades, resulting instead in chemokine sequestration, degradation, or transcytosis. Also known as interceptor (internalizing receptor) or chemokine-scavenging receptor or chemokine decoy receptor. Acts as a receptor for chemokines CXCL11 and CXCL12/SDF1. Chemokine binding does not activate G-protein-mediated signal transduction but instead induces beta-arrestin recruitment, leading to ligand internalization and activation of MAPK signaling pathway. Required for regulation of CXCR4 protein levels in migrating interneurons, thereby adapting their chemokine responsiveness. In glioma cells, transduces signals via MEK/ERK pathway, mediating resistance to apoptosis. Promotes cell growth and survival. Not involved in cell migration, adhesion or proliferation of normal hematopoietic progenitors but activated by CXCL11 in malignant hemapoietic cells, leading to phosphorylation of ERK1/2 (MAPK3/MAPK1) and enhanced cell adhesion and migration. Plays a regulatory role in CXCR4-mediated activation of cell surface integrins by CXCL12. Required for heart valve development. Regulates axon guidance in the oculomotor system through the regulation of CXCL12 levels. Functionally, (Microbial infection) Acts as a coreceptor with CXCR4 for a restricted number of HIV isolates. The chain is Atypical chemokine receptor 3 from Homo sapiens (Human).